Consider the following 188-residue polypeptide: Large ribosomal subunit protein eL18 (188 aa).

K119 is covalently cross-linked (Glycyl lysine isopeptide (Lys-Gly) (interchain with G-Cter in SUMO2)). S130 is subject to Phosphoserine. The interval 150–188 is disordered; the sequence is RHFGKAPGTPHSHTKPYVRSKGRKFERARGRRASRGYKN. Phosphothreonine is present on T158. Composition is skewed to basic residues over residues 161-171 and 178-188; these read SHTKPYVRSKG and RGRRASRGYKN. Residue K164 forms a Glycyl lysine isopeptide (Lys-Gly) (interchain with G-Cter in SUMO2) linkage.

Belongs to the eukaryotic ribosomal protein eL18 family. Component of the large ribosomal subunit.

The protein resides in the cytoplasm. It localises to the cytosol. Its subcellular location is the rough endoplasmic reticulum. Its function is as follows. Component of the large ribosomal subunit. The ribosome is a large ribonucleoprotein complex responsible for the synthesis of proteins in the cell. This Mus musculus (Mouse) protein is Large ribosomal subunit protein eL18 (Rpl18).